Here is a 229-residue protein sequence, read N- to C-terminus: Flagellar L-ring protein (229 aa).

An N-terminal signal peptide occupies residues 1–23 (MLSRLGARALVCLAGVAMLAASG). Cys-24 carries N-palmitoyl cysteine lipidation. The S-diacylglycerol cysteine moiety is linked to residue Cys-24.

This sequence belongs to the FlgH family. The basal body constitutes a major portion of the flagellar organelle and consists of four rings (L,P,S, and M) mounted on a central rod.

Its subcellular location is the cell outer membrane. The protein resides in the bacterial flagellum basal body. Its function is as follows. Assembles around the rod to form the L-ring and probably protects the motor/basal body from shearing forces during rotation. The protein is Flagellar L-ring protein of Cupriavidus taiwanensis (strain DSM 17343 / BCRC 17206 / CCUG 44338 / CIP 107171 / LMG 19424 / R1) (Ralstonia taiwanensis (strain LMG 19424)).